Reading from the N-terminus, the 603-residue chain is MAEVGLSQNSYASANHDKKSEQQIRRRVAEFHPNVWEYEFLQSLSSPYGAPSYCERINILIEEIKMDIFDGLVGDGEKNMNPSAYDLLERFFVVDILQSLGIERHFKKEIKAVLDYTYKYWNDEKGISLASGNLIVDLNTNALGFKVLRLNEYYVSPDVFQNFQDEMGQFIDLENFKEDESKLRSLLSLYRASEICFPEENILKQAKMFASTCLRQAIEENRELVNKSQLIIEVEYIMKYPWTCRVPRWEVWNYIKIFRGDTDASMCMKGVYEMPSDKRTKILELAILDFNILQDQHHNELKILSKWWNETKVKELNFFRQRHVEFYFLYACGLYEKELSATRLCFAKVGALITLLDDIFDTYGTIDELVPFATALIKWDMSIMNHLPEYMKTCFQFAYKTYMEIATEAEKIHGPCVQKWMHDTWKTIILAQLQDAEWIANNYLPSLTEYLESSVPSTTVPVLSLFSMLLIDTIFPDDIIEKITKFQSCVAWGCRLVDDSKDFQDEKEHGESASWIECYMKENPGTTRKQALDHANMLIESNFEELIKHRIFYEYCIPSTCKRLYFDMYRSVAFIFKDIDGFSKSSKAIRDDIKKILVEPIYF.

A compositionally biased stretch (polar residues) spans 1–13; the sequence is MAEVGLSQNSYAS. The disordered stretch occupies residues 1-23; it reads MAEVGLSQNSYASANHDKKSEQQ. Mg(2+)-binding residues include Asp-357, Asp-361, Asp-498, and Glu-506. The DDXXD motif motif lies at 357–361; sequence DDIFD.

The protein belongs to the terpene synthase family. Tpsa subfamily. Mg(2+) serves as cofactor. It depends on Mn(2+) as a cofactor. In terms of tissue distribution, mostly expressed in leaves and, to a lower extent, in stems and xylem.

The catalysed reaction is (2E,6E)-farnesyl diphosphate = beta-cadinene + diphosphate. It participates in secondary metabolite biosynthesis; terpenoid biosynthesis. Its function is as follows. Sesquiterpene synthase involved in the biosynthesis of volatile compounds. Mediates the conversion of (2E,6E)-farnesyl diphosphate (FPP) into beta-cadinene. Not active with geranyl diphosphate (GPP) and geranylgeranyl diphosphate (GGPP) as substrates. This Chamaecyparis formosensis (Formosan cypress) protein is Sesquiterpene synthase Cad.